The sequence spans 202 residues: Holliday junction resolvase RecU (202 aa).

Thr-85, Asp-87, Glu-100, and Gln-119 together coordinate Mg(2+).

The protein belongs to the RecU family. It depends on Mg(2+) as a cofactor.

The protein resides in the cytoplasm. The catalysed reaction is Endonucleolytic cleavage at a junction such as a reciprocal single-stranded crossover between two homologous DNA duplexes (Holliday junction).. Functionally, endonuclease that resolves Holliday junction intermediates in genetic recombination. Cleaves mobile four-strand junctions by introducing symmetrical nicks in paired strands. Promotes annealing of linear ssDNA with homologous dsDNA. Required for DNA repair, homologous recombination and chromosome segregation. The chain is Holliday junction resolvase RecU from Streptococcus equi subsp. equi (strain 4047).